The sequence spans 341 residues: Beta-hexosaminidase (341 aa).

Residues Asp-61, Arg-69, Arg-134, and Lys-164–His-165 contribute to the substrate site. His-177 functions as the Proton donor/acceptor in the catalytic mechanism. Asp-249 functions as the Nucleophile in the catalytic mechanism.

This sequence belongs to the glycosyl hydrolase 3 family. NagZ subfamily.

Its subcellular location is the cytoplasm. The catalysed reaction is Hydrolysis of terminal non-reducing N-acetyl-D-hexosamine residues in N-acetyl-beta-D-hexosaminides.. It participates in cell wall biogenesis; peptidoglycan recycling. In terms of biological role, plays a role in peptidoglycan recycling by cleaving the terminal beta-1,4-linked N-acetylglucosamine (GlcNAc) from peptide-linked peptidoglycan fragments, giving rise to free GlcNAc, anhydro-N-acetylmuramic acid and anhydro-N-acetylmuramic acid-linked peptides. This chain is Beta-hexosaminidase, found in Shewanella frigidimarina (strain NCIMB 400).